A 1301-amino-acid polypeptide reads, in one-letter code: DNA-directed RNA polymerase subunit beta (1301 aa).

The protein belongs to the RNA polymerase beta chain family. As to quaternary structure, in plastids the minimal PEP RNA polymerase catalytic core is composed of four subunits: alpha, beta, beta', and beta''. When a (nuclear-encoded) sigma factor is associated with the core the holoenzyme is formed, which can initiate transcription.

The protein resides in the plastid. The protein localises to the chloroplast. It catalyses the reaction RNA(n) + a ribonucleoside 5'-triphosphate = RNA(n+1) + diphosphate. Functionally, DNA-dependent RNA polymerase catalyzes the transcription of DNA into RNA using the four ribonucleoside triphosphates as substrates. In Chlorella vulgaris (Green alga), this protein is DNA-directed RNA polymerase subunit beta.